The primary structure comprises 940 residues: Serine/threonine-protein phosphatase 1 regulatory subunit 10 (940 aa).

Residues 1–348 (MGSGPIDPKE…EPAPPSEAME (348 aa)) are interaction with TOX4. Residues 73-147 (KLLNNWLTYS…SDWMAVIRSQ (75 aa)) enclose the TFIIS N-terminal domain. 4 disordered regions span residues 147-210 (QSST…KFRS), 248-270 (NVAA…NTTP), 304-400 (KIKK…KSVT), and 534-557 (VETL…LPPV). Basic and acidic residues-rich tracts occupy residues 153-166 (AEKD…EGKS) and 174-196 (PLTE…EKPK). K179 is covalently cross-linked (Glycyl lysine isopeptide (Lys-Gly) (interchain with G-Cter in SUMO2)). At T256 the chain carries Phosphothreonine. A Glycyl lysine isopeptide (Lys-Gly) (interchain with G-Cter in SUMO2) cross-link involves residue K262. A Phosphoserine modification is found at S313. The segment covering 325 to 336 (KTSTEPSTAKPS) has biased composition (low complexity). Residues 357–433 (PPVEVPELMD…NKIKDFGEAA (77 aa)) form a necessary for interaction with PPP1CA region. Phosphoserine is present on S382. The necessary for interaction with PPP1CC stretch occupies residues 393-408 (GRKRKSVTWPEEGKLR). A PP1-binding motif motif is present at residues 394 to 423 (RKRKSVTWPEEGKLREYFYFELDETERVNV). Phosphoserine; by PKA is present on S398. The tract at residues 418–619 (TERVNVNKIK…IKQMLVPHGL (202 aa)) is interaction with WDR82. The span at 540 to 551 (GGSGGSPDGAGG) shows a compositional bias: gly residues. Phosphoserine occurs at positions 545 and 591. Positions 617-905 (HGLLGPGPIA…HDGGHSHGGD (289 aa)) are disordered. Residues 644-655 (PPGPGGPMPGPH) show a composition bias toward pro residues. R665 bears the Omega-N-methylarginine mark. The span at 676 to 690 (GDPFWDGPGDPMRGG) shows a compositional bias: low complexity. An omega-N-methylarginine mark is found at R693 and R738. Gly residues-rich tracts occupy residues 725–763 (ARGG…GMGN) and 789–844 (GSMG…GSGG). 2 stretches are compositionally biased toward basic and acidic residues: residues 861–886 (PHDV…HDGP) and 894–903 (RGHDGGHSHG). The C3H1-type zinc finger occupies 906–934 (MSNRPVCRHFMMKGNCRYENNCAFYHPGV).

In terms of assembly, component of the PNUTS-PP1 complex (also named PTW/PP1 complex), composed of PPP1R10/PNUTS, TOX4, WDR82, and PPP1CA (or PPP1CB or PPP1CC). Phosphorylated on Ser-398 by PKA within the region necessary for interaction with PPP1CA.

It localises to the nucleus. It is found in the chromosome. Its function is as follows. Substrate-recognition component of the PNUTS-PP1 protein phosphatase complex, a protein phosphatase 1 (PP1) complex that promotes RNA polymerase II transcription pause-release, allowing transcription elongation. Promoter-proximal pausing by RNA polymerase II is a transcription halt following transcription initiation but prior to elongation, which acts as a checkpoint to control that transcripts are favorably configured for transcriptional elongation. The PNUTS-PP1 complex mediates the release of RNA polymerase II from promoter-proximal region of genes by catalyzing dephosphorylation of proteins involved in transcription, such as AFF4, CDK9, MEPCE, INTS12, NCBP1, POLR2M/GDOWN1 and SUPT6H. The PNUTS-PP1 complex also regulates RNA polymerase II transcription termination by mediating dephosphorylation of SUPT5H in termination zones downstream of poly(A) sites, thereby promoting deceleration of RNA polymerase II transcription. PNUTS-PP1 complex is also involved in the response to replication stress by mediating dephosphorylation of POLR2A at 'Ser-5' of the CTD, promoting RNA polymerase II degradation. The PNUTS-PP1 complex also plays a role in the control of chromatin structure and cell cycle progression during the transition from mitosis into interphase. PNUTS-PP1 complex mediates dephosphorylation of MYC, promoting MYC stability by preventing MYC ubiquitination by the SCF(FBXW7) complex. In addition to acts as a substrate-recognition component, PPP1R10/PNUTS also acts as a nuclear targeting subunit for the PNUTS-PP1 complex. In some context, PPP1R10/PNUTS also acts as an inhibitor of protein phosphatase 1 (PP1) activity by preventing access to substrates, such as RB. The sequence is that of Serine/threonine-protein phosphatase 1 regulatory subunit 10 (PPP1R10) from Pan troglodytes (Chimpanzee).